Here is a 62-residue protein sequence, read N- to C-terminus: Sucrase-isomaltase, intestinal (62 aa).

Topologically, residues 2 to 12 are cytoplasmic; the sequence is ARKKFSGLEIX. Residue serine 7 is modified to Phosphoserine; by PKA. A helical; Signal-anchor for type II membrane protein membrane pass occupies residues 13–32; sequence LIVLFAIVLSIAIALVVVXA. Over 33–38 the chain is Lumenal; that stretch reads SKXPAV. Tyrosine 59 is subject to Sulfotyrosine.

The protein belongs to the glycosyl hydrolase 31 family. In terms of assembly, the resulting sucrase and isomaltase subunits stay associated with one another in a complex by non-covalent linkages. The precursor is proteolytically cleaved when exposed to pancreatic proteases in the intestinal lumen. In terms of processing, sulfated.

The protein resides in the apical cell membrane. It carries out the reaction Hydrolysis of sucrose and maltose by an alpha-D-glucosidase-type action.. The catalysed reaction is Hydrolysis of (1-&gt;6)-alpha-D-glucosidic linkages in some oligosaccharides produced from starch and glycogen by alpha-amylase, and in isomaltose.. Functionally, plays an important role in the final stage of carbohydrate digestion. Isomaltase activity is specific for both alpha-1,4- and alpha-1,6-oligosaccharides. This is Sucrase-isomaltase, intestinal (SI) from Sus scrofa (Pig).